We begin with the raw amino-acid sequence, 329 residues long: GTP 3',8-cyclase (329 aa).

The Radical SAM core domain maps to 1-229 (MNPVDYLRIS…ESTIKGNGPA (229 aa)). Arginine 8 provides a ligand contact to GTP. [4Fe-4S] cluster-binding residues include cysteine 15 and cysteine 19. Tyrosine 21 serves as a coordination point for S-adenosyl-L-methionine. Cysteine 22 contacts [4Fe-4S] cluster. Position 60 (arginine 60) interacts with GTP. S-adenosyl-L-methionine is bound at residue glycine 64. Threonine 91 contributes to the GTP binding site. An S-adenosyl-L-methionine-binding site is contributed by serine 115. Lysine 155 provides a ligand contact to GTP. Methionine 189 is a binding site for S-adenosyl-L-methionine. [4Fe-4S] cluster-binding residues include cysteine 252 and cysteine 255. Position 257-259 (257-259 (RMR)) interacts with GTP. Cysteine 269 contacts [4Fe-4S] cluster.

The protein belongs to the radical SAM superfamily. MoaA family. As to quaternary structure, monomer and homodimer. Requires [4Fe-4S] cluster as cofactor.

The catalysed reaction is GTP + AH2 + S-adenosyl-L-methionine = (8S)-3',8-cyclo-7,8-dihydroguanosine 5'-triphosphate + 5'-deoxyadenosine + L-methionine + A + H(+). It participates in cofactor biosynthesis; molybdopterin biosynthesis. Functionally, catalyzes the cyclization of GTP to (8S)-3',8-cyclo-7,8-dihydroguanosine 5'-triphosphate. The chain is GTP 3',8-cyclase from Rippkaea orientalis (strain PCC 8801 / RF-1) (Cyanothece sp. (strain PCC 8801)).